Here is a 220-residue protein sequence, read N- to C-terminus: GTP cyclohydrolase 1 (220 aa).

3 residues coordinate Zn(2+): Cys109, His112, and Cys180.

This sequence belongs to the GTP cyclohydrolase I family. Homomer.

The catalysed reaction is GTP + H2O = 7,8-dihydroneopterin 3'-triphosphate + formate + H(+). The protein operates within cofactor biosynthesis; 7,8-dihydroneopterin triphosphate biosynthesis; 7,8-dihydroneopterin triphosphate from GTP: step 1/1. The protein is GTP cyclohydrolase 1 of Pectobacterium carotovorum subsp. carotovorum (strain PC1).